The primary structure comprises 192 residues: ATP-dependent Clp protease proteolytic subunit 1 (192 aa).

The active-site Nucleophile is S92. H117 is an active-site residue.

It belongs to the peptidase S14 family. As to quaternary structure, fourteen ClpP subunits assemble into 2 heptameric rings which stack back to back to give a disk-like structure with a central cavity, resembling the structure of eukaryotic proteasomes.

Its subcellular location is the cytoplasm. The catalysed reaction is Hydrolysis of proteins to small peptides in the presence of ATP and magnesium. alpha-casein is the usual test substrate. In the absence of ATP, only oligopeptides shorter than five residues are hydrolyzed (such as succinyl-Leu-Tyr-|-NHMec, and Leu-Tyr-Leu-|-Tyr-Trp, in which cleavage of the -Tyr-|-Leu- and -Tyr-|-Trp bonds also occurs).. Cleaves peptides in various proteins in a process that requires ATP hydrolysis. Has a chymotrypsin-like activity. Plays a major role in the degradation of misfolded proteins. The protein is ATP-dependent Clp protease proteolytic subunit 1 of Chlamydia trachomatis serovar D (strain ATCC VR-885 / DSM 19411 / UW-3/Cx).